A 132-amino-acid polypeptide reads, in one-letter code: Chemokine-like protein TAFA-5 (132 aa).

An N-terminal signal peptide occupies residues 1-43 (MAPSPRTGSRQDATALPSMSSTFWAFMILASLLIAYCSQLAAG). The N-linked (GlcNAc...) asparagine glycan is linked to asparagine 113.

It belongs to the TAFA family.

The protein resides in the secreted. Its function is as follows. Acts as a chemokine-like protein by regulating cell proliferation and migration through activation of G protein-coupled receptors (GPCRs), such as S1PR2 and FPR2. Stimulates chemotactic migration of macrophages mediated by the MAPK3/ERK1 and AKT1 pathway. Blocks TNFSF11/RANKL-induced osteoclast formation from macrophages by inhibiting up-regulation of osteoclast fusogenic and differentiation genes. Stimulation of macrophage migration and inhibition of osteoclast formation is mediated through the GPCR FPR2. Acts as an adipokine by negatively regulating vascular smooth muscle cell (VSMC) proliferation and migration in response to platelet-derived growth factor stimulation via GPCR S1PR2 and G protein GNA12/GNA13-transmitted RHOA signaling. Inhibits injury-induced cell proliferation and neointima formation in the femoral arteries. This chain is Chemokine-like protein TAFA-5 (TAFA5), found in Bos taurus (Bovine).